A 72-amino-acid chain; its full sequence is Lantibiotic Flvbeta.g (72 aa).

A propeptide spans 1 to 34 (cleaved by FlvT); that stretch reads MNNNNFDMEKFKKLAAIVSEGEIDEMLDETTVGA. Positions 36–40 form a cross-link, lanthionine (Ser-Cys); by FlvM2; sequence STLPC. 3 positions are modified to 2,3-didehydrobutyrine; by FlvM2: Thr-37, Thr-46, and Thr-48. 3 cross-links (beta-methyllanthionine (Thr-Cys); by FlvM2) span residues 55–61, 63–66, and 67–70; these read TTGFDWC, TGAC, and THSC.

Post-translationally, contains LL-lanthionine and DL-beta-methyllanthionine, when coepressed in E.coli with the flavecin synthetase FlvM2.

The protein localises to the secreted. In terms of biological role, lanthionine-containing peptide antibiotic (lantibiotic) that is probably weakly active on Gram-positive bacteria, since its analog [Del1]Flvbeta.g shows weak antibacterial activity against M.luteus. This activity is synergistically enhanced by [Del2]Flvalpha.a, an analog of Flvalpha.a, which is encoded by the same operon than Flvbeta.g. The bactericidal activity of lantibiotics is based on depolarization of energized bacterial cytoplasmic membranes, initiated by the formation of aqueous transmembrane pores. The protein is Lantibiotic Flvbeta.g of Ruminococcus flavefaciens.